The following is a 181-amino-acid chain: CDP-archaeol synthase (181 aa).

A run of 5 helical transmembrane segments spans residues 7–27 (VVWA…AVLA), 55–75 (LIGT…TPSV), 88–108 (LRAG…ASFL), 126–146 (LDFV…WFTE), and 147–167 (TFTL…HVVT).

It belongs to the CDP-archaeol synthase family. It depends on Mg(2+) as a cofactor.

It is found in the cell membrane. The catalysed reaction is 2,3-bis-O-(geranylgeranyl)-sn-glycerol 1-phosphate + CTP + H(+) = CDP-2,3-bis-O-(geranylgeranyl)-sn-glycerol + diphosphate. Its pathway is membrane lipid metabolism; glycerophospholipid metabolism. In terms of biological role, catalyzes the formation of CDP-2,3-bis-(O-geranylgeranyl)-sn-glycerol (CDP-archaeol) from 2,3-bis-(O-geranylgeranyl)-sn-glycerol 1-phosphate (DGGGP) and CTP. This reaction is the third ether-bond-formation step in the biosynthesis of archaeal membrane lipids. This Haloarcula marismortui (strain ATCC 43049 / DSM 3752 / JCM 8966 / VKM B-1809) (Halobacterium marismortui) protein is CDP-archaeol synthase.